The following is a 305-amino-acid chain: tRNA dimethylallyltransferase 1 (305 aa).

10–17 contributes to the ATP binding site; sequence GPTASGKS. A substrate-binding site is contributed by 12–17; sequence TASGKS. The interaction with substrate tRNA stretch occupies residues 35 to 38; sequence DSLT.

This sequence belongs to the IPP transferase family. In terms of assembly, monomer. Mg(2+) is required as a cofactor.

The catalysed reaction is adenosine(37) in tRNA + dimethylallyl diphosphate = N(6)-dimethylallyladenosine(37) in tRNA + diphosphate. In terms of biological role, catalyzes the transfer of a dimethylallyl group onto the adenine at position 37 in tRNAs that read codons beginning with uridine, leading to the formation of N6-(dimethylallyl)adenosine (i(6)A). The polypeptide is tRNA dimethylallyltransferase 1 (Trichlorobacter lovleyi (strain ATCC BAA-1151 / DSM 17278 / SZ) (Geobacter lovleyi)).